The following is a 194-amino-acid chain: dCTP deaminase (194 aa).

Residues 110-115, Asp128, 136-138, Tyr171, Lys178, and Gln182 each bind dCTP; these read RSSLAR and VLE. The active-site Proton donor/acceptor is the Glu138. Residues 173 to 194 form a disordered region; sequence SRQDAKYKNQQSAVASRINQDR. Positions 180-194 are enriched in polar residues; the sequence is KNQQSAVASRINQDR.

It belongs to the dCTP deaminase family. Homotrimer.

It catalyses the reaction dCTP + H2O + H(+) = dUTP + NH4(+). It participates in pyrimidine metabolism; dUMP biosynthesis; dUMP from dCTP (dUTP route): step 1/2. Catalyzes the deamination of dCTP to dUTP. The sequence is that of dCTP deaminase from Actinobacillus succinogenes (strain ATCC 55618 / DSM 22257 / CCUG 43843 / 130Z).